A 417-amino-acid polypeptide reads, in one-letter code: Tyrosine--tRNA ligase (417 aa).

Tyrosine 39 lines the L-tyrosine pocket. The short motif at 44–53 is the 'HIGH' region element; it reads PTAPSLHAGG. Tyrosine 176 and glutamine 180 together coordinate L-tyrosine. A 'KMSKS' region motif is present at residues 236-240; the sequence is KMGKS. Lysine 239 provides a ligand contact to ATP. Residues 350–417 enclose the S4 RNA-binding domain; sequence IGVLALMVLA…KKRHVLIRPA (68 aa).

It belongs to the class-I aminoacyl-tRNA synthetase family. TyrS type 1 subfamily. In terms of assembly, homodimer.

The protein resides in the cytoplasm. The enzyme catalyses tRNA(Tyr) + L-tyrosine + ATP = L-tyrosyl-tRNA(Tyr) + AMP + diphosphate + H(+). Its function is as follows. Catalyzes the attachment of tyrosine to tRNA(Tyr) in a two-step reaction: tyrosine is first activated by ATP to form Tyr-AMP and then transferred to the acceptor end of tRNA(Tyr). This is Tyrosine--tRNA ligase from Brucella suis biovar 1 (strain 1330).